A 172-amino-acid polypeptide reads, in one-letter code: Large ribosomal subunit protein uL10 (172 aa).

It belongs to the universal ribosomal protein uL10 family. As to quaternary structure, part of the ribosomal stalk of the 50S ribosomal subunit. The N-terminus interacts with L11 and the large rRNA to form the base of the stalk. The C-terminus forms an elongated spine to which L12 dimers bind in a sequential fashion forming a multimeric L10(L12)X complex.

Forms part of the ribosomal stalk, playing a central role in the interaction of the ribosome with GTP-bound translation factors. This chain is Large ribosomal subunit protein uL10, found in Francisella tularensis subsp. mediasiatica (strain FSC147).